We begin with the raw amino-acid sequence, 79 residues long: Sec-independent protein translocase protein TatA (79 aa).

Residues 1–21 traverse the membrane as a helical segment; that stretch reads MGGFTSIWHWVIVLLVIVLLF. Residues 48-79 are disordered; it reads EEEAKNEPKTLDAQVAQTKVHETSEIKSKQES. Positions 66 to 79 are enriched in basic and acidic residues; the sequence is KVHETSEIKSKQES.

The protein belongs to the TatA/E family. As to quaternary structure, the Tat system comprises two distinct complexes: a TatABC complex, containing multiple copies of TatA, TatB and TatC subunits, and a separate TatA complex, containing only TatA subunits. Substrates initially bind to the TatABC complex, which probably triggers association of the separate TatA complex to form the active translocon.

Its subcellular location is the cell inner membrane. In terms of biological role, part of the twin-arginine translocation (Tat) system that transports large folded proteins containing a characteristic twin-arginine motif in their signal peptide across membranes. TatA could form the protein-conducting channel of the Tat system. In Helicobacter pylori (strain Shi470), this protein is Sec-independent protein translocase protein TatA.